Consider the following 292-residue polypeptide: Probable endonuclease 4 (292 aa).

Residues His70, His111, Glu146, Asp180, His183, His215, Asp228, His230, and Glu260 each coordinate Zn(2+).

The protein belongs to the AP endonuclease 2 family. Zn(2+) is required as a cofactor.

The catalysed reaction is Endonucleolytic cleavage to 5'-phosphooligonucleotide end-products.. Functionally, endonuclease IV plays a role in DNA repair. It cleaves phosphodiester bonds at apurinic or apyrimidinic (AP) sites, generating a 3'-hydroxyl group and a 5'-terminal sugar phosphate. The polypeptide is Probable endonuclease 4 (Shouchella clausii (strain KSM-K16) (Alkalihalobacillus clausii)).